A 274-amino-acid polypeptide reads, in one-letter code: Phosphatidylglycerol--prolipoprotein diacylglyceryl transferase (274 aa).

The next 4 helical transmembrane spans lie at 24–44 (WYALAYIVGLLGGWWYTRFLS), 60–80 (LLVWATLGTILGGRLGYVVFY), 96–116 (WHGGMSFHGGLVGVITATVLF), and 122–142 (LSVARVGDLVALVAPLGLFFG). Arg-143 provides a ligand contact to a 1,2-diacyl-sn-glycero-3-phospho-(1'-sn-glycerol). Transmembrane regions (helical) follow at residues 182–202 (ATLEGLVLFCLLGLLWRFTAL), 207–227 (GQIIGLFLIGYGLSRITAEFF), and 241–261 (VTMGQILSLPMILAGIVVFVV).

It belongs to the Lgt family.

Its subcellular location is the cell inner membrane. The enzyme catalyses L-cysteinyl-[prolipoprotein] + a 1,2-diacyl-sn-glycero-3-phospho-(1'-sn-glycerol) = an S-1,2-diacyl-sn-glyceryl-L-cysteinyl-[prolipoprotein] + sn-glycerol 1-phosphate + H(+). It participates in protein modification; lipoprotein biosynthesis (diacylglyceryl transfer). In terms of biological role, catalyzes the transfer of the diacylglyceryl group from phosphatidylglycerol to the sulfhydryl group of the N-terminal cysteine of a prolipoprotein, the first step in the formation of mature lipoproteins. The polypeptide is Phosphatidylglycerol--prolipoprotein diacylglyceryl transferase (Rhodospirillum rubrum (strain ATCC 11170 / ATH 1.1.1 / DSM 467 / LMG 4362 / NCIMB 8255 / S1)).